The following is a 204-amino-acid chain: Tat proofreading chaperone DmsD (204 aa).

It belongs to the TorD/DmsD family. DmsD subfamily.

Functionally, required for biogenesis/assembly of DMSO reductase, but not for the interaction of the DmsA signal peptide with the Tat system. May be part of a chaperone cascade complex that facilitates a folding-maturation pathway for the substrate protein. The protein is Tat proofreading chaperone DmsD of Escherichia coli O157:H7.